A 492-amino-acid chain; its full sequence is 3-octaprenyl-4-hydroxybenzoate carboxy-lyase (492 aa).

N177 contributes to the Mn(2+) binding site. Prenylated FMN contacts are provided by residues 180–182 (IYR), 194–196 (RWL), and 199–200 (RG). E243 is a Mn(2+) binding site. The active-site Proton donor is D292.

The protein belongs to the UbiD family. As to quaternary structure, homohexamer. Prenylated FMN serves as cofactor. Requires Mn(2+) as cofactor.

It localises to the cell membrane. The catalysed reaction is a 4-hydroxy-3-(all-trans-polyprenyl)benzoate + H(+) = a 2-(all-trans-polyprenyl)phenol + CO2. It participates in cofactor biosynthesis; ubiquinone biosynthesis. Catalyzes the decarboxylation of 3-octaprenyl-4-hydroxy benzoate to 2-octaprenylphenol, an intermediate step in ubiquinone biosynthesis. The chain is 3-octaprenyl-4-hydroxybenzoate carboxy-lyase from Neisseria gonorrhoeae (strain ATCC 700825 / FA 1090).